The sequence spans 874 residues: Alanine--tRNA ligase (874 aa).

His-564, His-568, Cys-665, and His-669 together coordinate Zn(2+).

It belongs to the class-II aminoacyl-tRNA synthetase family. It depends on Zn(2+) as a cofactor.

The protein resides in the cytoplasm. It carries out the reaction tRNA(Ala) + L-alanine + ATP = L-alanyl-tRNA(Ala) + AMP + diphosphate. Catalyzes the attachment of alanine to tRNA(Ala) in a two-step reaction: alanine is first activated by ATP to form Ala-AMP and then transferred to the acceptor end of tRNA(Ala). Also edits incorrectly charged Ser-tRNA(Ala) and Gly-tRNA(Ala) via its editing domain. This chain is Alanine--tRNA ligase, found in Burkholderia pseudomallei (strain 668).